Here is a 1073-residue protein sequence, read N- to C-terminus: MGILSITDQPPLVQAIFNRDVEEVRSLLNQKENINVLDQERRTPLHTAAYIGDVAILELLILSGANVNAKDTVWLTPLHRAAASRNEKALHLLLKHSADVNARDKYWQTPLHVAAANRATKCVEAIIPLLSTVNVADRTGRTALHHAVHSGHLEMVNLLLNKGASLSTCDKKDRQPIHWAAFLGHLEVLKLLVARGADVMCKDKKGYTLLHTAAASGQIEVVRHLLRLGVEIDEPNSFGNTALHIACYMGQDAVANELVNYGANVNQPNEKGFTPLHFAAVSTNGALCLELLVNNGADVNFQSKEGKSPLHMAAIHGRFTRSQILIQNGSEIDCADKYGNTPLHVAARYGHELLISTLMTNGADTARRGIHDMFPLHLAVLFGFSDCCRKLLSSGQLYSIVSSLSNEHVLSAGFDINTPDNLGRTCLHAAASGGNVECLNLLLSSGADLRRRDKFGRTPLHYAAANGSYQCTVTLVTAGASINEADCKGCTPLHYAAASDTYRRAETHSGNSHDTDEEPLKESRMKEAFFCLEFLLDNGADPSLRDKQGYTAVHYAAAYGNRQNLELLLEMSFNCLEDVESTIPVSPLHLAAYNGHCEALKTLAETLVNLDVRDHKGRTALYLATERGSTECVEVLTSHGASALVKERKRKWTPLHAAAANGNTDSLHLLIDSGERADITDVMDIHGQTPLMLAIMNGHVDCVHLLLEKGSTADAADKRGRTALHRGAVTGCEDCLAALLDHDAFVLCRDFKGRTPIHFASACGHLEILRTLLQAALSTDPLDSVVDYSGYSPMHWASYSGHEDCLELLLEHNPFAYLEGNPFTPLHCAVINNQDSTAEMLVEALGAKIVNSRDAKGRTPLHAAAFADNIHGLQLLLRHQAEVDTTDKLGRTPLMMASENGHTAAVEFLLYQAKANITVLDVNKNTALHLACSKGHEKCALLILGETQDLGLINASNSALQMPLHIAARNGLATVVQALLSRGATVLAVDEEGHTPALACAPNKDVADCLALILSTMKPFPPKDAISSFSFNLLKNCGIAAKTAACGALPNGSTCPYSKDRHNAIGLDGCYSE.

ANK repeat units lie at residues 7 to 36 (TDQPPLVQAIFNRDVEEVRSLLNQKENINV), 40 to 69 (ERRTPLHTAAYIGDVAILELLILSGANVNA), 73 to 102 (VWLTPLHRAAASRNEKALHLLLKHSADVNA), 106 to 135 (YWQTPLHVAAANRATKCVEAIIPLLSTVNV), 139 to 168 (TGRTALHHAVHSGHLEMVNLLLNKGASLST), 172 to 201 (KDRQPIHWAAFLGHLEVLKLLVARGADVMC), 205 to 234 (KGYTLLHTAAASGQIEVVRHLLRLGVEIDE), 238 to 267 (FGNTALHIACYMGQDAVANELVNYGANVNQ), 271 to 301 (KGFTPLHFAAVSTNGALCLELLVNNGADVNF), 305 to 334 (EGKSPLHMAAIHGRFTRSQILIQNGSEIDC), 338 to 367 (YGNTPLHVAARYGHELLISTLMTNGADTAR), 371 to 400 (HDMFPLHLAVLFGFSDCCRKLLSSGQLYSI), 422 to 451 (LGRTCLHAAASGGNVECLNLLLSSGADLRR), 455 to 484 (FGRTPLHYAAANGSYQCTVTLVTAGASINE), 488 to 544 (KGCT…DPSL), 548 to 578 (QGYTAVHYAAAYGNRQNLELLLEMSFNCLED), 583 to 612 (IPVSPLHLAAYNGHCEALKTLAETLVNLDV), 616 to 645 (KGRTALYLATERGSTECVEVLTSHGASALV), 650 to 679 (RKWTPLHAAAANGNTDSLHLLIDSGERADI), 686 to 715 (HGQTPLMLAIMNGHVDCVHLLLEKGSTADA), 719 to 748 (RGRTALHRGAVTGCEDCLAALLDHDAFVLC), 752 to 781 (KGRTPIHFASACGHLEILRTLLQAALSTDP), 789 to 818 (SGYSPMHWASYSGHEDCLELLLEHNPFAYL), 821 to 851 (NPFTPLHCAVINNQDSTAEMLVEALGAKIVN), 856 to 885 (KGRTPLHAAAFADNIHGLQLLLRHQAEVDT), 889 to 919 (LGRTPLMMASENGHTAAVEFLLYQAKANITV), 923 to 952 (NKNTALHLACSKGHEKCALLILGETQDLGL), and 959 to 988 (ALQMPLHIAARNGLATVVQALLSRGATVLA).

In terms of assembly, protein phosphatase 6 (PP6) holoenzyme is proposed to be a heterotrimeric complex formed by the catalytic subunit, a SAPS domain-containing subunit (PP6R) and an ankyrin repeat-domain containing regulatory subunit (ARS).

Putative regulatory subunit of protein phosphatase 6 (PP6) that may be involved in the recognition of phosphoprotein substrates. The sequence is that of Serine/threonine-protein phosphatase 6 regulatory ankyrin repeat subunit C (ANKRD52) from Gallus gallus (Chicken).